We begin with the raw amino-acid sequence, 146 residues long: Aspartate carbamoyltransferase regulatory chain (146 aa).

Zn(2+) is bound by residues Cys-102, Cys-107, Cys-131, and Cys-134.

The protein belongs to the PyrI family. As to quaternary structure, contains catalytic and regulatory chains. The cofactor is Zn(2+).

Functionally, involved in allosteric regulation of aspartate carbamoyltransferase. The polypeptide is Aspartate carbamoyltransferase regulatory chain (Clostridium acetobutylicum (strain ATCC 824 / DSM 792 / JCM 1419 / IAM 19013 / LMG 5710 / NBRC 13948 / NRRL B-527 / VKM B-1787 / 2291 / W)).